The following is a 129-amino-acid chain: Arsenate-mycothiol transferase ArsC2 (129 aa).

Belongs to the low molecular weight phosphotyrosine protein phosphatase family.

It is found in the cytoplasm. The catalysed reaction is mycothiol + arsenate = arseno-mycothiol + H2O. In terms of biological role, involved in defense against toxic arsenate. Involved in the mycothiol/myoredoxin redox pathway which uses a mycothioltransferase mechanism; facilitates adduct formation between arsenate and mycothiol. The polypeptide is Arsenate-mycothiol transferase ArsC2 (arsC2) (Corynebacterium glutamicum (strain ATCC 13032 / K051)).